We begin with the raw amino-acid sequence, 188 residues long: C-type lectin domain family 5 member A (188 aa).

Topologically, residues 1–4 are cytoplasmic; the sequence is MNWH. The chain crosses the membrane as a helical; Signal-anchor for type II membrane protein span at residues 5–27; that stretch reads MIISGLIVVVLKVVGMTLFLLYF. The Extracellular portion of the chain corresponds to 28 to 188; sequence PQIFNKSNDG…YRRICEKNAK (161 aa). A glycan (N-linked (GlcNAc...) asparagine) is linked at N32. A disulfide bond links C71 and C82. The 107-residue stretch at 78 to 184 folds into the C-type lectin domain; that stretch reads YQARCFFLST…CDISYRRICE (107 aa). 3 N-linked (GlcNAc...) asparagine glycosylation sites follow: N93, N144, and N151. Intrachain disulfides connect C99-C183 and C161-C175.

As to quaternary structure, monomer. Homodimer. The majority of CLEC5A is expressed as a monomeric form on macrophages. Interacts with TYROBP/DAP12. The interaction with TYROBP is required for CLEC5A cell surface expression. Interacts with HCST/DAP10. Forms a CLEC5A/TYROBP/HCST trimolecular complex depending almost solely on TYROBP. In terms of assembly, (Microbial infection) Interacts with dengue virus envelope protein E. Post-translationally, N-glycosylated. Contains sialic acid residues. Highly expressed in bone marrow with lower levels in synovium, lung and bronchus. Expressed in peripheral blood monocytes and in the monocyte/macrophage cell lines U-937 and Mono-Mac-6, but not in cell lines of other origins. Expression is down-regulated when monocytes differentiate into dendritic cells.

It is found in the cell membrane. Functionally, functions as a positive regulator of osteoclastogenesis. Cell surface receptor that signals via TYROBP. Regulates inflammatory responses. In terms of biological role, (Microbial infection) Critical macrophage receptor for dengue virus serotypes 1-4. The binding of dengue virus to CLEC5A triggers signaling through the phosphorylation of TYROBP. This interaction does not result in viral entry, but stimulates pro-inflammatory cytokine release. The sequence is that of C-type lectin domain family 5 member A (CLEC5A) from Homo sapiens (Human).